Here is a 394-residue protein sequence, read N- to C-terminus: Phosphopentomutase (394 aa).

Mn(2+) contacts are provided by Asp-13, Asp-286, His-291, Asp-327, His-328, and His-339.

The protein belongs to the phosphopentomutase family. Mn(2+) is required as a cofactor.

The protein localises to the cytoplasm. It carries out the reaction 2-deoxy-alpha-D-ribose 1-phosphate = 2-deoxy-D-ribose 5-phosphate. It catalyses the reaction alpha-D-ribose 1-phosphate = D-ribose 5-phosphate. It functions in the pathway carbohydrate degradation; 2-deoxy-D-ribose 1-phosphate degradation; D-glyceraldehyde 3-phosphate and acetaldehyde from 2-deoxy-alpha-D-ribose 1-phosphate: step 1/2. Its function is as follows. Isomerase that catalyzes the conversion of deoxy-ribose 1-phosphate (dRib-1-P) and ribose 1-phosphate (Rib-1-P) to deoxy-ribose 5-phosphate (dRib-5-P) and ribose 5-phosphate (Rib-5-P), respectively. The chain is Phosphopentomutase from Bacillus thuringiensis (strain Al Hakam).